We begin with the raw amino-acid sequence, 370 residues long: Actin-related protein 2/3 complex subunit 1A-A (370 aa).

WD repeat units follow at residues F6–G45, E50–T89, P140–K179, S202–Q241, T244–S284, and L322–Q365.

It belongs to the WD repeat ARPC1 family. In terms of assembly, component of the Arp2/3 complex.

It is found in the cytoplasm. The protein resides in the cytoskeleton. Its subcellular location is the nucleus. Its function is as follows. Probably functions as a component of the Arp2/3 complex which is involved in regulation of actin polymerization and together with an activating nucleation-promoting factor (NPF) mediates the formation of branched actin networks. In addition to its role in the cytoplasmic cytoskeleton, the Arp2/3 complex also promotes actin polymerization in the nucleus, thereby regulating gene transcription and repair of damaged DNA. This chain is Actin-related protein 2/3 complex subunit 1A-A (arpc1a-a), found in Xenopus laevis (African clawed frog).